Reading from the N-terminus, the 174-residue chain is Shikimate kinase 2 (174 aa).

12–17 contacts ATP; that stretch reads GCGKTT. 2 residues coordinate Mg(2+): Thr16 and Asp32. Positions 34, 58, and 79 each coordinate substrate. Residues 112 to 126 are LID domain; that stretch reads QAAPEEDLRPTLTGK. Arg120 lines the ATP pocket. Residue Arg139 coordinates substrate.

Belongs to the shikimate kinase family. AroL subfamily. Monomer. Mg(2+) serves as cofactor.

It localises to the cytoplasm. The catalysed reaction is shikimate + ATP = 3-phosphoshikimate + ADP + H(+). It participates in metabolic intermediate biosynthesis; chorismate biosynthesis; chorismate from D-erythrose 4-phosphate and phosphoenolpyruvate: step 5/7. Its function is as follows. Catalyzes the specific phosphorylation of the 3-hydroxyl group of shikimic acid using ATP as a cosubstrate. The chain is Shikimate kinase 2 from Shigella dysenteriae serotype 1 (strain Sd197).